The primary structure comprises 287 residues: 4-hydroxybenzoate octaprenyltransferase (287 aa).

8 helical membrane passes run 21–39 (PIGT…WLAA), 95–115 (VLAL…TMNP), 116–136 (LTIG…FMKR), 138–158 (IPIP…MAYA), 161–181 (ANAL…WTIA), 213–233 (IIGA…QLSE), 234–251 (LGSS…LFVY), and 264–284 (CFQA…GVVI).

This sequence belongs to the UbiA prenyltransferase family. It depends on Mg(2+) as a cofactor.

Its subcellular location is the cell inner membrane. It carries out the reaction all-trans-octaprenyl diphosphate + 4-hydroxybenzoate = 4-hydroxy-3-(all-trans-octaprenyl)benzoate + diphosphate. It participates in cofactor biosynthesis; ubiquinone biosynthesis. Catalyzes the prenylation of para-hydroxybenzoate (PHB) with an all-trans polyprenyl group. Mediates the second step in the final reaction sequence of ubiquinone-8 (UQ-8) biosynthesis, which is the condensation of the polyisoprenoid side chain with PHB, generating the first membrane-bound Q intermediate 3-octaprenyl-4-hydroxybenzoate. This Aeromonas hydrophila subsp. hydrophila (strain ATCC 7966 / DSM 30187 / BCRC 13018 / CCUG 14551 / JCM 1027 / KCTC 2358 / NCIMB 9240 / NCTC 8049) protein is 4-hydroxybenzoate octaprenyltransferase.